The chain runs to 319 residues: Acetyl-coenzyme A carboxylase carboxyl transferase subunit alpha (319 aa).

The 262-residue stretch at 35 to 296 (NIDEEVHRLR…KAQLLADLAD (262 aa)) folds into the CoA carboxyltransferase C-terminal domain.

The protein belongs to the AccA family. In terms of assembly, acetyl-CoA carboxylase is a heterohexamer composed of biotin carboxyl carrier protein (AccB), biotin carboxylase (AccC) and two subunits each of ACCase subunit alpha (AccA) and ACCase subunit beta (AccD).

It is found in the cytoplasm. The enzyme catalyses N(6)-carboxybiotinyl-L-lysyl-[protein] + acetyl-CoA = N(6)-biotinyl-L-lysyl-[protein] + malonyl-CoA. It participates in lipid metabolism; malonyl-CoA biosynthesis; malonyl-CoA from acetyl-CoA: step 1/1. Its function is as follows. Component of the acetyl coenzyme A carboxylase (ACC) complex. First, biotin carboxylase catalyzes the carboxylation of biotin on its carrier protein (BCCP) and then the CO(2) group is transferred by the carboxyltransferase to acetyl-CoA to form malonyl-CoA. In Shigella sonnei (strain Ss046), this protein is Acetyl-coenzyme A carboxylase carboxyl transferase subunit alpha.